The primary structure comprises 20 residues: Fibrinolytic zinc metalloproteinase (20 aa).

One can recognise a Peptidase M12B domain in the interval 7 to 20 (RYVQLVITVDHVMN).

Zn(2+) is required as a cofactor.

It is found in the secreted. In terms of biological role, hydrolyzes alpha and beta chains of human fibrinogen and human fibrin. No activity against the gamma chain of human fibrinogen, human thrombin, bovine serum albumin, ovalbumin and hemoglobin. Has anticoagulant activity on human plasma and protects mice against death due from experimentally induced platelet thromboembolism with an ED(50) of 40 ug/kg. This chain is Fibrinolytic zinc metalloproteinase, found in Ganoderma lucidum (Ling zhi medicinal fungus).